A 340-amino-acid chain; its full sequence is Trimethylamine N-oxide transport system ATP-binding protein TmoW (340 aa).

The 237-residue stretch at 32–268 (GRSFDDIRAD…PTTGYVAKFT (237 aa)) folds into the ABC transporter domain. 64–71 (GLSGSGKS) serves as a coordination point for ATP.

This sequence belongs to the ABC transporter superfamily. As to quaternary structure, the complex is probably composed of two ATP-binding proteins (TmoW), two transmembrane proteins (TmoV) and a solute-binding protein (TmoX).

Its subcellular location is the cell inner membrane. It catalyses the reaction a quaternary ammonium(out) + ATP + H2O = a quaternary ammonium(in) + ADP + phosphate + H(+). Functionally, part of the ABC transporter complex TmoXWV involved in trimethylamine N-oxide (TMAO) import. Responsible for energy coupling to the transport system. Is specific for TMAO and essential for TMAO metabolism. The sequence is that of Trimethylamine N-oxide transport system ATP-binding protein TmoW from Ruegeria pomeroyi (strain ATCC 700808 / DSM 15171 / DSS-3) (Silicibacter pomeroyi).